The sequence spans 355 residues: DNA polymerase IV (355 aa).

Residues 7–188 (IIHIDMDCFY…LPVRKLFGVG (182 aa)) form the UmuC domain. Residues aspartate 11 and aspartate 106 each contribute to the Mg(2+) site. Glutamate 107 is an active-site residue.

Belongs to the DNA polymerase type-Y family. Monomer. Mg(2+) is required as a cofactor.

The protein localises to the cytoplasm. The enzyme catalyses DNA(n) + a 2'-deoxyribonucleoside 5'-triphosphate = DNA(n+1) + diphosphate. Functionally, poorly processive, error-prone DNA polymerase involved in untargeted mutagenesis. Copies undamaged DNA at stalled replication forks, which arise in vivo from mismatched or misaligned primer ends. These misaligned primers can be extended by PolIV. Exhibits no 3'-5' exonuclease (proofreading) activity. May be involved in translesional synthesis, in conjunction with the beta clamp from PolIII. In Legionella pneumophila (strain Corby), this protein is DNA polymerase IV.